We begin with the raw amino-acid sequence, 196 residues long: Proteasome subunit beta 1 (196 aa).

Positions Met1 to Ala6 are cleaved as a propeptide — removed in mature form; by autocatalysis. Thr7 serves as the catalytic Nucleophile.

Belongs to the peptidase T1B family. As to quaternary structure, the 20S proteasome core is composed of 14 alpha and 14 beta subunits that assemble into four stacked heptameric rings, resulting in a barrel-shaped structure. The two inner rings, each composed of seven catalytic beta subunits, are sandwiched by two outer rings, each composed of seven alpha subunits. The catalytic chamber with the active sites is on the inside of the barrel. Has a gated structure, the ends of the cylinder being occluded by the N-termini of the alpha-subunits. Is capped at one or both ends by the proteasome regulatory ATPase, PAN.

The protein resides in the cytoplasm. It catalyses the reaction Cleavage of peptide bonds with very broad specificity.. With respect to regulation, the formation of the proteasomal ATPase PAN-20S proteasome complex, via the docking of the C-termini of PAN into the intersubunit pockets in the alpha-rings, triggers opening of the gate for substrate entry. Interconversion between the open-gate and close-gate conformations leads to a dynamic regulation of the 20S proteasome proteolysis activity. In terms of biological role, component of the proteasome core, a large protease complex with broad specificity involved in protein degradation. This Saccharolobus solfataricus (strain ATCC 35092 / DSM 1617 / JCM 11322 / P2) (Sulfolobus solfataricus) protein is Proteasome subunit beta 1.